The following is a 322-amino-acid chain: Agmatinase (322 aa).

Mn(2+) is bound by residues H136, D160, H162, D164, D243, and D245.

Belongs to the arginase family. Agmatinase subfamily. Requires Mn(2+) as cofactor.

The catalysed reaction is agmatine + H2O = urea + putrescine. It functions in the pathway amine and polyamine biosynthesis; putrescine biosynthesis via agmatine pathway; putrescine from agmatine: step 1/1. Catalyzes the formation of putrescine from agmatine. In Chromobacterium violaceum (strain ATCC 12472 / DSM 30191 / JCM 1249 / CCUG 213 / NBRC 12614 / NCIMB 9131 / NCTC 9757 / MK), this protein is Agmatinase.